The sequence spans 55 residues: Large ribosomal subunit protein bL33B (55 aa).

The protein belongs to the bacterial ribosomal protein bL33 family.

This Rhodococcus jostii (strain RHA1) protein is Large ribosomal subunit protein bL33B.